The chain runs to 148 residues: MPSKLRKTRKLRGHVSHGHGRIGKHRKHPGGRGNAGGMHHHRINFDKYHPGYFGKVGMRHYHLKKNQSFCPTINLDKLWTLVSEQTRLNHAKNLEGPAPIIDAVHAGYYKVLGKGKLPKQPVIVKAKFFSRKAEEKIKSVGGACVLGA.

Residues 1 to 30 (MPSKLRKTRKLRGHVSHGHGRIGKHRKHPG) show a composition bias toward basic residues. The interval 1–38 (MPSKLRKTRKLRGHVSHGHGRIGKHRKHPGGRGNAGGM) is disordered.

Belongs to the universal ribosomal protein uL15 family. In terms of assembly, component of the large ribosomal subunit.

The protein resides in the cytoplasm. In terms of biological role, component of the large ribosomal subunit. The ribosome is a large ribonucleoprotein complex responsible for the synthesis of proteins in the cell. This Xenopus laevis (African clawed frog) protein is Large ribosomal subunit protein uL15 (rpl27a).